The following is a 508-amino-acid chain: T-complex protein 1 subunit beta (508 aa).

Belongs to the TCP-1 chaperonin family. As to quaternary structure, component of the T-complex protein 1 (TCP1) complex.

Its subcellular location is the cytoplasm. In terms of biological role, molecular chaperone; assists the folding of proteins upon ATP hydrolysis. The polypeptide is T-complex protein 1 subunit beta (CCT2) (Encephalitozoon cuniculi (strain GB-M1) (Microsporidian parasite)).